The sequence spans 146 residues: Universal stress protein MT1672 (146 aa).

The protein belongs to the universal stress protein A family.

The sequence is that of Universal stress protein MT1672 from Mycobacterium tuberculosis (strain CDC 1551 / Oshkosh).